A 577-amino-acid chain; its full sequence is Proline--tRNA ligase (577 aa).

This sequence belongs to the class-II aminoacyl-tRNA synthetase family. ProS type 1 subfamily. As to quaternary structure, homodimer.

Its subcellular location is the cytoplasm. It carries out the reaction tRNA(Pro) + L-proline + ATP = L-prolyl-tRNA(Pro) + AMP + diphosphate. Functionally, catalyzes the attachment of proline to tRNA(Pro) in a two-step reaction: proline is first activated by ATP to form Pro-AMP and then transferred to the acceptor end of tRNA(Pro). As ProRS can inadvertently accommodate and process non-cognate amino acids such as alanine and cysteine, to avoid such errors it has two additional distinct editing activities against alanine. One activity is designated as 'pretransfer' editing and involves the tRNA(Pro)-independent hydrolysis of activated Ala-AMP. The other activity is designated 'posttransfer' editing and involves deacylation of mischarged Ala-tRNA(Pro). The misacylated Cys-tRNA(Pro) is not edited by ProRS. In Chlamydia caviae (strain ATCC VR-813 / DSM 19441 / 03DC25 / GPIC) (Chlamydophila caviae), this protein is Proline--tRNA ligase.